We begin with the raw amino-acid sequence, 387 residues long: Peptostreptococcal albumin-binding protein (387 aa).

The N-terminal stretch at 1-26 (MKLNKKLLMAALAGAIVVGGGVNTFA) is a signal peptide. The interval 122-155 (LFDKHELGGLGKDKGPGRFDENGWENNEHGYETR) is disordered. Residues 213–265 (TIDQWLLKNAKEDAIAELKKAGITSDFYFNAINKAKTVEEVNALKNEILKAHA) form a GA module region. A disordered region spans residues 266–360 (GKEVNPSTPE…EKAALPEAGR (95 aa)). Polar residues predominate over residues 270–282 (NPSTPEVTPSVPQ). Over residues 298–360 (GTKEDGKKEN…EKAALPEAGR (63 aa)) the composition is skewed to basic and acidic residues. The LPXTG sorting signal signature appears at 355–359 (LPEAG). Ala-358 carries the post-translational modification Pentaglycyl murein peptidoglycan amidated alanine. A propeptide spans 359–387 (GRRKAEILTLAAASLSSVAGAFISLKKRK) (removed by sortase).

The protein localises to the secreted. The protein resides in the cell wall. Its function is as follows. Binds serum albumin. The sequence is that of Peptostreptococcal albumin-binding protein (pab) from Finegoldia magna (Peptostreptococcus magnus).